The sequence spans 457 residues: PDZ and LIM domain protein 7 (457 aa).

One can recognise a PDZ domain in the interval 1 to 85; the sequence is MDSFKVVLEG…RLSLGLSRAQ (85 aa). Position 78 is a phosphoserine (Ser78). 2 disordered regions span residues 81–132 and 186–226; these read LSRA…LSQN and FMKK…PWAV. Thr96 bears the Phosphothreonine mark. Residue Arg103 is modified to Asymmetric dimethylarginine. Phosphoserine is present on Ser111. Ser247 is modified (phosphoserine). LIM zinc-binding domains follow at residues 280 to 338, 339 to 398, and 399 to 457; these read PVCH…VRYA, PSCA…MFGT, and KCRG…FSHV.

In terms of assembly, binds via its LIM zinc-binding 3 domain (LIM 3) domain to endocytic codes of INSR, but not with those of IGF1R, LDLR, TFRC, or EGFR. Interacts with various PKC isoforms through the LIM zinc-binding domains. Binds to RET in a phosphorylation-independent manner via its LIM zinc-binding 2 domain (LIM 2). Probably part of a complex with SHC and the RET dimer. Interacts with TPM2, TBX4 and TBX5. Interacts (via LIM domains) with SIPA1L1. Expressed in kidney, heart, brain, lung, and skeletal muscle. Overexpression results in the synthesis of an unidentified soluble factor which acts on cells in the osteoblast lineage causing them to differentiate and secrete BMP-2.

It localises to the cytoplasm. Its subcellular location is the cytoskeleton. Its function is as follows. May function as a scaffold on which the coordinated assembly of proteins can occur. May play a role as an adapter that, via its PDZ domain, localizes LIM-binding proteins to actin filaments of both skeletal muscle and nonmuscle tissues. Involved in both of the two fundamental mechanisms of bone formation, direct bone formation (e.g. embryonic flat bones mandible and cranium), and endochondral bone formation (e.g. embryonic long bone development). Plays a role during fracture repair. Involved in BMP6 signaling pathway. This is PDZ and LIM domain protein 7 (Pdlim7) from Rattus norvegicus (Rat).